The sequence spans 177 residues: Large ribosomal subunit protein uL6 (177 aa).

This sequence belongs to the universal ribosomal protein uL6 family. Part of the 50S ribosomal subunit.

This protein binds to the 23S rRNA, and is important in its secondary structure. It is located near the subunit interface in the base of the L7/L12 stalk, and near the tRNA binding site of the peptidyltransferase center. The sequence is that of Large ribosomal subunit protein uL6 from Photobacterium profundum (strain SS9).